The primary structure comprises 130 residues: Small ribosomal subunit protein uS12c (130 aa).

The protein belongs to the universal ribosomal protein uS12 family. Part of the 30S ribosomal subunit.

It is found in the plastid. The protein localises to the chloroplast. In terms of biological role, with S4 and S5 plays an important role in translational accuracy. Located at the interface of the 30S and 50S subunits. The sequence is that of Small ribosomal subunit protein uS12c (rps12) from Tetradesmus obliquus (Green alga).